Here is a 241-residue protein sequence, read N- to C-terminus: Hydantoin racemase (241 aa).

The protein belongs to the HyuE racemase family. In terms of assembly, homotetramer.

The enzyme catalyses a D-5-monosubstituted hydantoin = a L-5-monosubstituted hydantoin. It catalyses the reaction D-5-benzylhydantoin = L-5-benzylhydantoin. The catalysed reaction is D-5-isobutylhydantoin = L-5-isobutylhydantoin. Inhibited by Cu(2+), Hg(2+), Pb(2+) and Zn(2+). The activity is twofold lower in the presence of Mn(2+), Co(2+) and Ni(2+). The insignificant effect of the metal chelating agent EDTA on the hydantoin racemase activity would indicate that it is not a metalloenzyme. In terms of biological role, may be involved in the asymmetric conversion of racemic 5-substituted hydantoins to the corresponding L-amino acids. Catalyzes the racemization via enolization of D- and L-5-monosubstituted hydantoins. This chain is Hydantoin racemase, found in Rhizobium meliloti (Ensifer meliloti).